The sequence spans 226 residues: UPF0319 protein YPO1442/y2728/YP_1333 (226 aa).

Positions 1–20 are cleaved as a signal peptide; the sequence is MKLGLVAGMLAVCFSFSSVA.

Belongs to the UPF0319 family.

The protein is UPF0319 protein YPO1442/y2728/YP_1333 of Yersinia pestis.